Reading from the N-terminus, the 967-residue chain is uncharacterized protein (967 aa).

The first 29 residues, 1–29, serve as a signal peptide directing secretion; the sequence is MKKKLKSVLIWFLIFTFNLSLGSFREVFA. BIG2 domains follow at residues 38 to 107 and 133 to 190; these read TAIT…QDGS and LPVG…VNDG.

This is an uncharacterized protein from Clostridium acetobutylicum (strain ATCC 824 / DSM 792 / JCM 1419 / IAM 19013 / LMG 5710 / NBRC 13948 / NRRL B-527 / VKM B-1787 / 2291 / W).